The following is a 126-amino-acid chain: Glycine cleavage system H protein (126 aa).

The Lipoyl-binding domain maps to 22–104; it reads VAYVGITDYA…YGKGWLIKIS (83 aa). Lysine 63 carries the N6-lipoyllysine modification.

It belongs to the GcvH family. As to quaternary structure, the glycine cleavage system is composed of four proteins: P, T, L and H. Requires (R)-lipoate as cofactor.

Its function is as follows. The glycine cleavage system catalyzes the degradation of glycine. The H protein shuttles the methylamine group of glycine from the P protein to the T protein. The polypeptide is Glycine cleavage system H protein (Parabacteroides distasonis (strain ATCC 8503 / DSM 20701 / CIP 104284 / JCM 5825 / NCTC 11152)).